The sequence spans 287 residues: 4-hydroxybenzoate octaprenyltransferase (287 aa).

8 helical membrane passes run 19–39, 43–63, 94–116, 135–155, 160–180, 207–227, 234–254, and 269–286; these read PIGS…AADG, LHVL…GCVI, LALA…PLVI, FFAI…PMGF, GEVP…AVAY, FDVA…GWVG, ALYF…YTLI, and NNWL…DYLI.

It belongs to the UbiA prenyltransferase family. Mg(2+) is required as a cofactor.

It localises to the cell inner membrane. It carries out the reaction all-trans-octaprenyl diphosphate + 4-hydroxybenzoate = 4-hydroxy-3-(all-trans-octaprenyl)benzoate + diphosphate. It participates in cofactor biosynthesis; ubiquinone biosynthesis. In terms of biological role, catalyzes the prenylation of para-hydroxybenzoate (PHB) with an all-trans polyprenyl group. Mediates the second step in the final reaction sequence of ubiquinone-8 (UQ-8) biosynthesis, which is the condensation of the polyisoprenoid side chain with PHB, generating the first membrane-bound Q intermediate 3-octaprenyl-4-hydroxybenzoate. The sequence is that of 4-hydroxybenzoate octaprenyltransferase from Azoarcus sp. (strain BH72).